Reading from the N-terminus, the 444-residue chain is ATP-dependent protease ATPase subunit HslU (444 aa).

Residues Ile-18, 60–65 (GVGKTE), Asp-256, Glu-322, and Arg-394 contribute to the ATP site.

It belongs to the ClpX chaperone family. HslU subfamily. In terms of assembly, a double ring-shaped homohexamer of HslV is capped on each side by a ring-shaped HslU homohexamer. The assembly of the HslU/HslV complex is dependent on binding of ATP.

It localises to the cytoplasm. Its function is as follows. ATPase subunit of a proteasome-like degradation complex; this subunit has chaperone activity. The binding of ATP and its subsequent hydrolysis by HslU are essential for unfolding of protein substrates subsequently hydrolyzed by HslV. HslU recognizes the N-terminal part of its protein substrates and unfolds these before they are guided to HslV for hydrolysis. The protein is ATP-dependent protease ATPase subunit HslU of Serratia proteamaculans (strain 568).